The sequence spans 130 residues: Probable 15 kDa heat shock protein (130 aa).

In terms of domain architecture, sHSP spans 21–130 (ERVRILAPRV…LTKKIEVRSE (110 aa)).

Belongs to the small heat shock protein (HSP20) family.

The chain is Probable 15 kDa heat shock protein (hsp15) from Leptospira interrogans serogroup Icterohaemorrhagiae serovar Lai (strain 56601).